The chain runs to 276 residues: Undecaprenyl-diphosphatase (276 aa).

7 consecutive transmembrane segments (helical) span residues 42–62 (AVTAFTAVIQMGAILAAIVYF), 88–108 (ALLGWYVIAGTIPIGLAGYLG), 116–136 (LRSLWYVVAGLVLWSIAIVYA), 149–169 (MRLPDAVFIGVIQVLALVPGV), 187–207 (VAATRFSFLLAIPALLAAGIF), 222–242 (SLVVGTGMAFLTAYASIAWLL), and 253–273 (FVWYRVTVAVFVVAALTTGLV).

It belongs to the UppP family.

Its subcellular location is the cell membrane. The enzyme catalyses di-trans,octa-cis-undecaprenyl diphosphate + H2O = di-trans,octa-cis-undecaprenyl phosphate + phosphate + H(+). In terms of biological role, catalyzes the dephosphorylation of undecaprenyl diphosphate (UPP). Confers resistance to bacitracin. This is Undecaprenyl-diphosphatase from Acidothermus cellulolyticus (strain ATCC 43068 / DSM 8971 / 11B).